The primary structure comprises 134 residues: Large ribosomal subunit protein bL12 (134 aa).

The protein belongs to the bacterial ribosomal protein bL12 family. As to quaternary structure, homodimer. Part of the ribosomal stalk of the 50S ribosomal subunit. Forms a multimeric L10(L12)X complex, where L10 forms an elongated spine to which 2 to 4 L12 dimers bind in a sequential fashion. Binds GTP-bound translation factors.

Forms part of the ribosomal stalk which helps the ribosome interact with GTP-bound translation factors. Is thus essential for accurate translation. This chain is Large ribosomal subunit protein bL12, found in Chlamydia abortus (strain DSM 27085 / S26/3) (Chlamydophila abortus).